The following is a 355-amino-acid chain: Guanine nucleotide-binding protein G(i) subunit alpha-2 (355 aa).

The N-myristoyl glycine moiety is linked to residue G2. C3 carries S-palmitoyl cysteine lipidation. In terms of domain architecture, G-alpha spans 32–355 (REVKLLLLGA…KNNLKDCGLF (324 aa)). Positions 35–48 (KLLLLGAGESGKST) are G1 motif. Residues 40 to 47 (GAGESGKS), 176 to 182 (LRTRVKT), 201 to 205 (DVGGQ), 270 to 273 (NKKD), and A327 contribute to the GTP site. 2 residues coordinate Mg(2+): S47 and T182. A G2 motif region spans residues 174–182 (DVLRTRVKT). A G3 motif region spans residues 197 to 206 (FKMFDVGGQR). Residues 266–273 (ILFLNKKD) are G4 motif. The G5 motif stretch occupies residues 325–330 (TCATDT).

The protein belongs to the G-alpha family. G(i/o/t/z) subfamily. As to quaternary structure, g proteins are composed of 3 units; alpha, beta and gamma. The alpha chain contains the guanine nucleotide binding site. In this context, interacts with GNB2. Interacts with UNC5B. Interacts with GPSM1. Interacts with RGS12 and RGS14. Interacts (inactive GDP-bound form) with NUCB1 (via GBA motif); the interaction leads to activation of GNAI3. Interacts (inactive GDP-bound form) with CCDC88C/DAPLE (via GBA motif). Interacts (inactive GDP-bound form) with CCDC8A/GIV (via GBA motif). As to expression, ubiquitously expressed. Most abundant in the lung and in the spleen.

The protein resides in the cytoplasm. It localises to the cytoskeleton. Its subcellular location is the microtubule organizing center. The protein localises to the centrosome. It is found in the cell membrane. The protein resides in the membrane. Guanine nucleotide-binding proteins (G proteins) are involved as modulators or transducers in various transmembrane signaling systems. The G(i) proteins are involved in hormonal regulation of adenylate cyclase: they inhibit the cyclase in response to beta-adrenergic stimuli. May play a role in cell division. In Cavia porcellus (Guinea pig), this protein is Guanine nucleotide-binding protein G(i) subunit alpha-2 (GNAI2).